A 410-amino-acid chain; its full sequence is Elongation factor Tu, chloroplastic (410 aa).

Residues 10–213 form the tr-type G domain; sequence KPHLNIGTIG…TVDEYIPTPK (204 aa). The tract at residues 19–26 is G1; sequence GHVDHGKT. Residue 19–26 coordinates GTP; it reads GHVDHGKT. Residue Thr-26 participates in Mg(2+) binding. The segment at 60 to 64 is G2; that stretch reads GITIN. The interval 81–84 is G3; it reads DCPG. Residues 81 to 85 and 136 to 139 each bind GTP; these read DCPGH and NKAD. The G4 stretch occupies residues 136–139; it reads NKAD. Residues 174–176 form a G5 region; it reads SAI.

It belongs to the TRAFAC class translation factor GTPase superfamily. Classic translation factor GTPase family. EF-Tu/EF-1A subfamily.

It is found in the plastid. Its subcellular location is the chloroplast. It carries out the reaction GTP + H2O = GDP + phosphate + H(+). Its function is as follows. GTP hydrolase that promotes the GTP-dependent binding of aminoacyl-tRNA to the A-site of ribosomes during protein biosynthesis. The sequence is that of Elongation factor Tu, chloroplastic (tufA) from Codium fragile (Dead man's fingers).